The following is a 212-amino-acid chain: Peptide methionine sulfoxide reductase MsrA (212 aa).

Residue Cys-51 is part of the active site.

This sequence belongs to the MsrA Met sulfoxide reductase family.

The catalysed reaction is L-methionyl-[protein] + [thioredoxin]-disulfide + H2O = L-methionyl-(S)-S-oxide-[protein] + [thioredoxin]-dithiol. It carries out the reaction [thioredoxin]-disulfide + L-methionine + H2O = L-methionine (S)-S-oxide + [thioredoxin]-dithiol. Its function is as follows. Has an important function as a repair enzyme for proteins that have been inactivated by oxidation. Catalyzes the reversible oxidation-reduction of methionine sulfoxide in proteins to methionine. This Vibrio parahaemolyticus serotype O3:K6 (strain RIMD 2210633) protein is Peptide methionine sulfoxide reductase MsrA.